The following is a 205-amino-acid chain: Red chlorophyll catabolite reductase (205 aa).

Residues glutamate 39 and aspartate 175 each contribute to the substrate site.

Homodimer. Post-translationally, the N-terminus is blocked. As to expression, in etiolated and green primary leaves. Low amount in roots.

The protein resides in the plastid. It is found in the chloroplast stroma. The enzyme catalyses primary fluorescent chlorophyll catabolite + 2 oxidized [2Fe-2S]-[ferredoxin] = red chlorophyll catabolite + 2 reduced [2Fe-2S]-[ferredoxin] + 3 H(+). It participates in porphyrin-containing compound metabolism; chlorophyll degradation. In terms of biological role, catalyzes the key reaction of chlorophyll catabolism, porphyrin macrocycle cleavage of pheophorbide a (pheide a) to a primary fluorescent catabolite (pFCC). Works in a two-step reaction with pheophorbide a oxygenase (PaO) by reducing the C20/C1 double bond of the intermediate, RCC. The protein is Red chlorophyll catabolite reductase (rccR) of Hordeum vulgare (Barley).